Here is a 72-residue protein sequence, read N- to C-terminus: Protein RALF-like 20 (72 aa).

The N-terminal stretch at 1–27 (MVLSKKTIMQSFALMIILSIVMSTTEA) is a signal peptide. Intrachain disulfides connect C43-C51 and C63-C69.

The protein belongs to the plant rapid alkalinization factor (RALF) family.

It localises to the secreted. Functionally, cell signaling peptide that may regulate plant stress, growth, and development. Mediates a rapid alkalinization of extracellular space by mediating a transient increase in the cytoplasmic Ca(2+) concentration leading to a calcium-dependent signaling events through a cell surface receptor and a concomitant activation of some intracellular mitogen-activated protein kinases. The sequence is that of Protein RALF-like 20 (RALFL20) from Arabidopsis thaliana (Mouse-ear cress).